An 85-amino-acid chain; its full sequence is U4-theraphotoxin-Hhn1i (85 aa).

Residues 1–22 form the signal peptide; the sequence is MKVTLIAILTCAAVLVLHTTAA. The propeptide occupies 23 to 48; the sequence is EELEAESQLMEVGMPDTELAAVDEER. Cystine bridges form between cysteine 52-cysteine 66, cysteine 56-cysteine 77, and cysteine 71-cysteine 82.

Belongs to the neurotoxin 12 (Hwtx-2) family. 02 (Hwtx-2) subfamily. In terms of tissue distribution, expressed by the venom gland.

It is found in the secreted. Postsynaptic neurotoxin. This chain is U4-theraphotoxin-Hhn1i, found in Cyriopagopus hainanus (Chinese bird spider).